The chain runs to 146 residues: MKISFFNFPDDLLYEPERHVWIKVEENKVVSVGMTDLGQYLAGKIFQVSVPRRVGERVNNRTILFSVESAKWIGKIRLQIEGEVVDINERVIKNPSIINEDPYGSWIIKVSVTDVDLVKRAFKNIQDCRSQFEEEANRIVSWKNSS.

A Lipoyl-binding domain is found at 29–111 (VVSVGMTDLG…PYGSWIIKVS (83 aa)). Lysine 71 is modified (N6-lipoyllysine).

The protein belongs to the GcvH family. The glycine cleavage system is composed of four proteins: P, T, L and H. Requires (R)-lipoate as cofactor.

Functionally, the glycine cleavage system catalyzes the degradation of glycine. The H protein shuttles the methylamine group of glycine from the P protein to the T protein. This chain is Probable glycine cleavage system H protein 3, found in Sulfolobus acidocaldarius (strain ATCC 33909 / DSM 639 / JCM 8929 / NBRC 15157 / NCIMB 11770).